We begin with the raw amino-acid sequence, 450 residues long: ATP-dependent protease ATPase subunit HslU (450 aa).

ATP-binding positions include valine 27, 69 to 74, aspartate 263, glutamate 328, and arginine 400; that span reads GVGKTE.

This sequence belongs to the ClpX chaperone family. HslU subfamily. In terms of assembly, a double ring-shaped homohexamer of HslV is capped on each side by a ring-shaped HslU homohexamer. The assembly of the HslU/HslV complex is dependent on binding of ATP.

The protein resides in the cytoplasm. Functionally, ATPase subunit of a proteasome-like degradation complex; this subunit has chaperone activity. The binding of ATP and its subsequent hydrolysis by HslU are essential for unfolding of protein substrates subsequently hydrolyzed by HslV. HslU recognizes the N-terminal part of its protein substrates and unfolds these before they are guided to HslV for hydrolysis. The sequence is that of ATP-dependent protease ATPase subunit HslU from Aquifex aeolicus (strain VF5).